The following is a 207-amino-acid chain: Proteasome subunit beta (207 aa).

The propeptide at 1–9 (MSNKNTFEG) is removed in mature form; by autocatalysis. The Nucleophile role is filled by threonine 10.

The protein belongs to the peptidase T1B family. As to quaternary structure, the 20S proteasome core is composed of 14 alpha and 14 beta subunits that assemble into four stacked heptameric rings, resulting in a barrel-shaped structure. The two inner rings, each composed of seven catalytic beta subunits, are sandwiched by two outer rings, each composed of seven alpha subunits. The catalytic chamber with the active sites is on the inside of the barrel. Has a gated structure, the ends of the cylinder being occluded by the N-termini of the alpha-subunits. Is capped at one or both ends by the proteasome regulatory ATPase, PAN.

It is found in the cytoplasm. The enzyme catalyses Cleavage of peptide bonds with very broad specificity.. The formation of the proteasomal ATPase PAN-20S proteasome complex, via the docking of the C-termini of PAN into the intersubunit pockets in the alpha-rings, triggers opening of the gate for substrate entry. Interconversion between the open-gate and close-gate conformations leads to a dynamic regulation of the 20S proteasome proteolysis activity. In terms of biological role, component of the proteasome core, a large protease complex with broad specificity involved in protein degradation. The protein is Proteasome subunit beta of Methanobrevibacter ruminantium (strain ATCC 35063 / DSM 1093 / JCM 13430 / OCM 146 / M1) (Methanobacterium ruminantium).